The following is a 573-amino-acid chain: Sulfite reductase [NADPH] hemoprotein beta-component (573 aa).

[4Fe-4S] cluster contacts are provided by cysteine 438, cysteine 444, cysteine 483, and cysteine 487. Cysteine 487 is a siroheme binding site.

The protein belongs to the nitrite and sulfite reductase 4Fe-4S domain family. As to quaternary structure, alpha(8)-beta(8). The alpha component is a flavoprotein, the beta component is a hemoprotein. Siroheme is required as a cofactor. [4Fe-4S] cluster serves as cofactor.

The catalysed reaction is hydrogen sulfide + 3 NADP(+) + 3 H2O = sulfite + 3 NADPH + 4 H(+). It functions in the pathway sulfur metabolism; hydrogen sulfide biosynthesis; hydrogen sulfide from sulfite (NADPH route): step 1/1. Component of the sulfite reductase complex that catalyzes the 6-electron reduction of sulfite to sulfide. This is one of several activities required for the biosynthesis of L-cysteine from sulfate. The sequence is that of Sulfite reductase [NADPH] hemoprotein beta-component from Shouchella clausii (strain KSM-K16) (Alkalihalobacillus clausii).